A 331-amino-acid chain; its full sequence is Ketol-acid reductoisomerase (NADP(+)) (331 aa).

Residues 2-182 enclose the KARI N-terminal Rossmann domain; sequence ARMYYDADAQ…GGTRAGILET (181 aa). Residues 25–28, Ser-51, Ser-53, and 83–86 each bind NADP(+); these read YGSQ and DEVQ. Residue His-108 is part of the active site. Gly-134 contributes to the NADP(+) binding site. Residues 183 to 328 enclose the KARI C-terminal knotted domain; the sequence is TFREETETDL…QELRSMFSWL (146 aa). 4 residues coordinate Mg(2+): Asp-191, Glu-195, Glu-227, and Glu-231. Ser-252 serves as a coordination point for substrate.

It belongs to the ketol-acid reductoisomerase family. Requires Mg(2+) as cofactor.

It carries out the reaction (2R)-2,3-dihydroxy-3-methylbutanoate + NADP(+) = (2S)-2-acetolactate + NADPH + H(+). The enzyme catalyses (2R,3R)-2,3-dihydroxy-3-methylpentanoate + NADP(+) = (S)-2-ethyl-2-hydroxy-3-oxobutanoate + NADPH + H(+). It participates in amino-acid biosynthesis; L-isoleucine biosynthesis; L-isoleucine from 2-oxobutanoate: step 2/4. The protein operates within amino-acid biosynthesis; L-valine biosynthesis; L-valine from pyruvate: step 2/4. Functionally, involved in the biosynthesis of branched-chain amino acids (BCAA). Catalyzes an alkyl-migration followed by a ketol-acid reduction of (S)-2-acetolactate (S2AL) to yield (R)-2,3-dihydroxy-isovalerate. In the isomerase reaction, S2AL is rearranged via a Mg-dependent methyl migration to produce 3-hydroxy-3-methyl-2-ketobutyrate (HMKB). In the reductase reaction, this 2-ketoacid undergoes a metal-dependent reduction by NADPH to yield (R)-2,3-dihydroxy-isovalerate. The sequence is that of Ketol-acid reductoisomerase (NADP(+)) from Thermosynechococcus vestitus (strain NIES-2133 / IAM M-273 / BP-1).